The chain runs to 264 residues: Homeobox protein vent1 (264 aa).

2 stretches are compositionally biased toward basic and acidic residues: residues 16-26 (KEEATDGKDSM) and 44-59 (YAKE…DVQE). The interval 16–140 (KEEATDGKDS…RLRTAFTPQQ (125 aa)) is disordered. Polar residues predominate over residues 60–80 (HTTSFQCSLGEQVINRPSANP). The span at 117–130 (TEQREKSPKSDLQR) shows a compositional bias: basic and acidic residues. A DNA-binding region (homeobox) is located at residues 129–188 (QRRLRTAFTPQQISKLEQAFNKQRYLGAPERKKLATSLQLSEIQVKTWFQNRRMKLKRQI).

In terms of tissue distribution, expressed in the ventral marginal zone of gastrulae. At stage 11.5, also expressed in the ventral region of the animal cap (ectoderm). At the end of gastrulation, predominantly localized to the ventral and lateral regions of the closing slit blastopore. At early tail bud stage, expression is maintained only in the forming proctodeum.

It localises to the nucleus. In terms of biological role, transcriptional repressor. Cooperates with vent2 in a ventral signaling pathway downstream of bmp4, which antagonizes the Spemann organizer and dorsal mesoderm formation, and leads to ventral mesoderm formation. Acts downstream of bmp4 to repress transcription of foxa4-B/XFD-1'. Binds to DNA with preference for the target sequence 5'-CTATT[T/C]G-3'. Also binds 5'-TGCATTTTG-3' at a lower frequency, and occasionally 5'-TTGATC-3'. Binds to the homeobox 2 (HBX2) repressor element in the promoter of the myf5 gene and represses myf5 transcription in the ventral domain. This chain is Homeobox protein vent1 (vent1), found in Xenopus laevis (African clawed frog).